A 126-amino-acid chain; its full sequence is Protein Wnt-7(II) (126 aa).

A lipid anchor (O-palmitoleoyl serine; by PORCN) is attached at S1. C92 and C107 form a disulfide bridge. N-linked (GlcNAc...) asparagine glycosylation occurs at N93.

This sequence belongs to the Wnt family. Post-translationally, palmitoleoylation is required for efficient binding to frizzled receptors. Depalmitoleoylation leads to Wnt signaling pathway inhibition.

It localises to the secreted. The protein localises to the extracellular space. The protein resides in the extracellular matrix. In terms of biological role, ligand for members of the frizzled family of seven transmembrane receptors. Probable developmental protein. May be a signaling molecule which affects the development of discrete regions of tissues. Is likely to signal over only few cell diameters. In Eptatretus stoutii (Pacific hagfish), this protein is Protein Wnt-7(II) (WNT-7(II)).